We begin with the raw amino-acid sequence, 842 residues long: MSVKPETETGTAQTAAAEAPEEGVYSFAAMEAKWPQVWEDLKVFTPADDGSRERRYVLDMFPYPSGDLHMGHAEAFAMGDVVARYLRQKGFDVLHPIGWDSFGLPAENAAIKRNAHPSEWTYANIDTQAASFKRYAISADWSRRLHTSDPEYYRWTQWLFKRFYERGLAYRKDSPVNWCPKDLTVLANEQVVNGACERCGTPVTKKSLNQWYFKITDYADRLLEDMDQLQGHWPERVLAMQRNWIGRSEGAHVRFVIEATADRAEREVTVFTTRPDTLYGATFFVVAADAHLALDLVTPEQHDELMAYREKVKALSEIERQSTEREKTGVFTGRYAINPLNGEKLPVWAADYVLADYGTGAIMAVPAHDQRDLDFAKTFGLPVRAVLDTGDEDPAETGVATAGEGTLKNSGELDGLSKSEGIPAAIEILEKLGTGEKFVNFRLRDWLLSRQRFWGTPIPIIHCGECGEVPVPDDQLPVRLPDDLRGEALSPKGTSPLAAAVEWVNVECPNCGRAAQRDTDTMDTFVDSSWYFLRFVSPDYTEGPFDPEKINNWMPVGQYVGGVEHAILHLLYARFFTKVIKDIGLIEANEPFSALLNQGQVLNGGKAMSKSLGNGVDLGEQLDKFGVDAVRLTMVFASPPEDDVDWADVSPSGSAKFLARAWRLGQDVSSEPGVDPATGDRALRTVTHKTIADAAELLDNNKFNVVVARLMELVNATRKTIDSGAGAADPAVREAVEAVAVILSLFAPYTAEDLWNTLGHPASVANAGWPKHDDALLVQDTVTAVVQVQGKVRDRLEVSPDITEDALRELALASENVQRALDGRGIRTVIVRAPKLVNIVPA.

The short motif at 62–72 (PYPSGDLHMGH) is the 'HIGH' region element. The segment at 390–414 (GDEDPAETGVATAGEGTLKNSGELD) is disordered. The short motif at 607–611 (AMSKS) is the 'KMSKS' region element. Lys610 provides a ligand contact to ATP.

It belongs to the class-I aminoacyl-tRNA synthetase family.

The protein resides in the cytoplasm. It catalyses the reaction tRNA(Leu) + L-leucine + ATP = L-leucyl-tRNA(Leu) + AMP + diphosphate. This is Leucine--tRNA ligase from Paenarthrobacter aurescens (strain TC1).